We begin with the raw amino-acid sequence, 704 residues long: Translin-associated factor X-interacting protein 1 (704 aa).

A disordered region spans residues 1 to 37 (MANLQERKSFSKPRISIQASGGTPEAKGIEKRKLSQK). Coiled coils occupy residues 190 to 230 (EISV…AEEY) and 304 to 342 (RRDL…LQLH).

In terms of assembly, interacts with TSNAX. Specifically expressed in testes. Predominantly detected in the post-meiotic stages of germ cells.

Its subcellular location is the cytoplasm. It localises to the perinuclear region. Functionally, possible role in spermatogenesis. The sequence is that of Translin-associated factor X-interacting protein 1 from Mus musculus (Mouse).